Reading from the N-terminus, the 313-residue chain is Flagellin (313 aa).

2 coiled-coil regions span residues 5-33 and 97-117; these read INTNDSALLAQNNLTKSKGILGSAIERLS and VQSENGSNSKSDLDSIQKEVT. 4 consecutive repeat copies span residues 179–197, 199–217, 255–259, and 262–266. The 2 X 19 AA approximate tandem repeats stretch occupies residues 179–217; that stretch reads KEAVAAKPAVPAQPAVPADPKNGVAAKPAVPAQPEVKAQ. Residues 190 to 199 are compositionally biased toward low complexity; the sequence is AQPAVPADPK. The disordered stretch occupies residues 190 to 211; sequence AQPAVPADPKNGVAAKPAVPAQ. Residues 252–298 are a coiled coil; that stretch reads ESTVNNLNNTVNNLSAARSRIEDADYAVEVSNMSRGQILQQAGTSVL. The interval 255 to 266 is 2 X 5 AA approximate repeats of V-N-N-L-N; that stretch reads VNNLNNTVNNLS.

This sequence belongs to the bacterial flagellin family.

It localises to the secreted. Its subcellular location is the bacterial flagellum. Its function is as follows. Flagellin is the subunit protein which polymerizes to form the filaments of bacterial flagella. The chain is Flagellin (fliC) from Xenorhabdus nematophila (Achromobacter nematophilus).